Reading from the N-terminus, the 265-residue chain is Palmitoyltransferase ZDHHC21 (265 aa).

Topologically, residues 1–16 (MGLRIHFVVDPHGWCC) are cytoplasmic. The chain crosses the membrane as a helical span at residues 17 to 37 (MGLIVFVWLYNIVLIPKIVLF). The Extracellular segment spans residues 38 to 44 (PHYEEGH). Residues 45–65 (IPGILIIIFYGISIFCLVALV) traverse the membrane as a helical segment. Topologically, residues 66–133 (RASITDPGRL…NNCVGEDNHW (68 aa)) are cytoplasmic. Residues 90 to 140 (ELCNKCNLMRPKRSHHCSRCGHCVRRMDHHCPWINNCVGEDNHWLFLQLCF) enclose the DHHC domain. Catalysis depends on Cys120, which acts as the S-palmitoyl cysteine intermediate. A helical membrane pass occupies residues 134-154 (LFLQLCFYTELLTCYALMFSF). The Extracellular portion of the chain corresponds to 155–185 (CHYYYFLPLKKRNLDLFVFRHELAIMRLAAF). Residues 186–206 (MGITMLVGITGLFYTQLIGII) form a helical membrane-spanning segment. Topologically, residues 207–265 (TDTTSIEKMSNCCEDISRPRKPWQQTFSEVFGTRWKILWFIPFRQRQPLRVPYHFANHV) are cytoplasmic.

Belongs to the DHHC palmitoyltransferase family. In terms of tissue distribution, widely expressed.

It localises to the golgi apparatus membrane. It is found in the golgi apparatus. Its subcellular location is the cis-Golgi network membrane. The protein localises to the cell membrane. It catalyses the reaction L-cysteinyl-[protein] + hexadecanoyl-CoA = S-hexadecanoyl-L-cysteinyl-[protein] + CoA. Its function is as follows. Palmitoyltransferase that catalyzes the addition of palmitate onto various protein substrates. Palmitoylates sex steroid hormone receptors, including ESR1, PGR and AR, thereby regulating their targeting to the plasma membrane. This affects rapid intracellular signaling by sex hormones via ERK and AKT kinases and the generation of cAMP, but does not affect that mediated by their nuclear receptor. Palmitoylates FYN, regulates its localization in hair follicles and plays a key role in epidermal homeostasis and hair follicle differentiation. Through the palmitoylation of PLCB1 and the regulation of PLCB1 downstream signaling may indirectly regulate the function of the endothelial barrier and the adhesion of leukocytes to the endothelium. Also has a palmitoyltransferase activity toward ADRA1D, positively regulating its activity and expression and may thereby play a role in vascular contraction. May also palmitoylate eNOS and LCK. This chain is Palmitoyltransferase ZDHHC21, found in Homo sapiens (Human).